Consider the following 288-residue polypeptide: Oxaloacetate decarboxylase (288 aa).

Ser47 is a binding site for substrate. A Mg(2+)-binding site is contributed by Asp85. Residues Arg156 and His232 each contribute to the substrate site.

This sequence belongs to the isocitrate lyase/PEP mutase superfamily. Oxaloacetate decarboxylase family. As to quaternary structure, homotetramer; dimer of dimers. The cofactor is Mg(2+).

The enzyme catalyses oxaloacetate + H(+) = pyruvate + CO2. Its function is as follows. Catalyzes the decarboxylation of oxaloacetate into pyruvate. Seems to play a role in maintaining cellular concentrations of bicarbonate and pyruvate. The protein is Oxaloacetate decarboxylase of Rhodopseudomonas palustris (strain TIE-1).